We begin with the raw amino-acid sequence, 206 residues long: Histidine biosynthesis bifunctional protein HisIE (206 aa).

A phosphoribosyl-AMP cyclohydrolase region spans residues 1 to 117 (MGSETTAAGD…SCFPTAPSQF (117 aa)). Residues 118-206 (LGSLDALIAE…AVALLESRHK (89 aa)) are phosphoribosyl-ATP pyrophosphohydrolase.

The protein in the N-terminal section; belongs to the PRA-CH family. It in the C-terminal section; belongs to the PRA-PH family.

The protein localises to the cytoplasm. It catalyses the reaction 1-(5-phospho-beta-D-ribosyl)-ATP + H2O = 1-(5-phospho-beta-D-ribosyl)-5'-AMP + diphosphate + H(+). It carries out the reaction 1-(5-phospho-beta-D-ribosyl)-5'-AMP + H2O = 1-(5-phospho-beta-D-ribosyl)-5-[(5-phospho-beta-D-ribosylamino)methylideneamino]imidazole-4-carboxamide. It participates in amino-acid biosynthesis; L-histidine biosynthesis; L-histidine from 5-phospho-alpha-D-ribose 1-diphosphate: step 2/9. The protein operates within amino-acid biosynthesis; L-histidine biosynthesis; L-histidine from 5-phospho-alpha-D-ribose 1-diphosphate: step 3/9. The polypeptide is Histidine biosynthesis bifunctional protein HisIE (Xanthomonas campestris pv. campestris (strain ATCC 33913 / DSM 3586 / NCPPB 528 / LMG 568 / P 25)).